A 516-amino-acid chain; its full sequence is Extracellular endo-inulinase inuB (516 aa).

The signal sequence occupies residues 1–25; that stretch reads MLNPKVAYMVWMTCLGLTLPSQAQS. Residues 40–43, glutamine 59, tryptophan 67, and 99–100 each bind substrate; these read WMNE and FT. Glutamate 43 is an active-site residue. A glycan (N-linked (GlcNAc...) asparagine) is linked at asparagine 109. Residues 175-176 and glutamate 233 contribute to the substrate site; that span reads RD. N-linked (GlcNAc...) asparagine glycosylation is found at asparagine 372, asparagine 419, and asparagine 424.

The protein belongs to the glycosyl hydrolase 32 family.

It localises to the secreted. It catalyses the reaction Endohydrolysis of (2-&gt;1)-beta-D-fructosidic linkages in inulin.. In terms of biological role, endo-inulinase involved in utilization of the plant storage polymer inulin, consisting of fructooligosaccharides with a degree of polymerization (DP) value from 2 to 60. The polypeptide is Extracellular endo-inulinase inuB (inuB) (Aspergillus niger).